A 215-amino-acid chain; its full sequence is MEVVILNENGDSVGNLEVVDEIFKSEVNNNLLYEAIKNELANRRQGTHSTKTRAEVSGGGKKPWRQKGTGRARAGSTRSPIWVGGGKTHTPKPRDYSYRLPKKMKRKALLSVLSLKYGNNVLKVFEDFTFDAPKTKRMASFISKVKEPNSRKVAFVVGKDESLGDNYNKLLLSLRNIKDLKLVNADSMSIHPLYYADEVYFTKTALSKLNARIKG.

Positions 43–97 (RRQGTHSTKTRAEVSGGGKKPWRQKGTGRARAGSTRSPIWVGGGKTHTPKPRDYS) are disordered.

It belongs to the universal ribosomal protein uL4 family. As to quaternary structure, part of the 50S ribosomal subunit.

Functionally, one of the primary rRNA binding proteins, this protein initially binds near the 5'-end of the 23S rRNA. It is important during the early stages of 50S assembly. It makes multiple contacts with different domains of the 23S rRNA in the assembled 50S subunit and ribosome. In terms of biological role, forms part of the polypeptide exit tunnel. The protein is Large ribosomal subunit protein uL4 of Brachyspira pilosicoli (Serpulina pilosicoli).